Here is a 190-residue protein sequence, read N- to C-terminus: Putative manganese efflux pump MntP (190 aa).

A run of 6 helical transmembrane segments spans residues 3-23 (PISL…AALG), 41-61 (LIFG…GQVA), 69-89 (DHWI…YNGI), 105-125 (FWIL…VGVG), 133-153 (IVVA…IGVM), and 168-188 (IIGG…HLSA).

The protein belongs to the MntP (TC 9.B.29) family.

Its subcellular location is the cell inner membrane. In terms of biological role, probably functions as a manganese efflux pump. This chain is Putative manganese efflux pump MntP, found in Pseudomonas syringae pv. syringae (strain B728a).